The primary structure comprises 107 residues: MKIKKGDTVQVITGKDKGKQGKVIAAYPRDERVLVEGVNRVKKHTKAGPTAGGSQAGGIVTTEAPIHVSNVQLVVEKDGNKVVTRVGYRFDDEGNKIRVAKRTGEDI.

This sequence belongs to the universal ribosomal protein uL24 family. As to quaternary structure, part of the 50S ribosomal subunit.

One of two assembly initiator proteins, it binds directly to the 5'-end of the 23S rRNA, where it nucleates assembly of the 50S subunit. In terms of biological role, one of the proteins that surrounds the polypeptide exit tunnel on the outside of the subunit. In Streptomyces avermitilis (strain ATCC 31267 / DSM 46492 / JCM 5070 / NBRC 14893 / NCIMB 12804 / NRRL 8165 / MA-4680), this protein is Large ribosomal subunit protein uL24.